A 388-amino-acid polypeptide reads, in one-letter code: Dual-specificity RNA methyltransferase RlmN (388 aa).

The Proton acceptor role is filled by E109. The region spanning 115-354 is the Radical SAM core domain; the sequence is EDDRATLCVS…TIVRKTRGDD (240 aa). A disulfide bridge connects residues C122 and C359. Residues C129, C133, and C136 each coordinate [4Fe-4S] cluster. S-adenosyl-L-methionine-binding positions include 183–184, S215, 237–239, and N316; these read GE and SLH. The S-methylcysteine intermediate role is filled by C359.

This sequence belongs to the radical SAM superfamily. RlmN family. [4Fe-4S] cluster serves as cofactor.

The protein resides in the cytoplasm. The enzyme catalyses adenosine(2503) in 23S rRNA + 2 reduced [2Fe-2S]-[ferredoxin] + 2 S-adenosyl-L-methionine = 2-methyladenosine(2503) in 23S rRNA + 5'-deoxyadenosine + L-methionine + 2 oxidized [2Fe-2S]-[ferredoxin] + S-adenosyl-L-homocysteine. It carries out the reaction adenosine(37) in tRNA + 2 reduced [2Fe-2S]-[ferredoxin] + 2 S-adenosyl-L-methionine = 2-methyladenosine(37) in tRNA + 5'-deoxyadenosine + L-methionine + 2 oxidized [2Fe-2S]-[ferredoxin] + S-adenosyl-L-homocysteine. Its function is as follows. Specifically methylates position 2 of adenine 2503 in 23S rRNA and position 2 of adenine 37 in tRNAs. m2A2503 modification seems to play a crucial role in the proofreading step occurring at the peptidyl transferase center and thus would serve to optimize ribosomal fidelity. This Salmonella typhimurium (strain LT2 / SGSC1412 / ATCC 700720) protein is Dual-specificity RNA methyltransferase RlmN.